A 505-amino-acid chain; its full sequence is Lysine--tRNA ligase (505 aa).

The Mg(2+) site is built by Glu415 and Glu422.

Belongs to the class-II aminoacyl-tRNA synthetase family. In terms of assembly, homodimer. Requires Mg(2+) as cofactor.

Its subcellular location is the cytoplasm. It carries out the reaction tRNA(Lys) + L-lysine + ATP = L-lysyl-tRNA(Lys) + AMP + diphosphate. This chain is Lysine--tRNA ligase, found in Pectobacterium carotovorum subsp. carotovorum (strain PC1).